The sequence spans 185 residues: Endoribonuclease YbeY (185 aa).

Zn(2+) is bound by residues His135, His139, and His145.

Belongs to the endoribonuclease YbeY family. Requires Zn(2+) as cofactor.

It is found in the cytoplasm. Its function is as follows. Single strand-specific metallo-endoribonuclease involved in late-stage 70S ribosome quality control and in maturation of the 3' terminus of the 16S rRNA. This chain is Endoribonuclease YbeY, found in Parasynechococcus marenigrum (strain WH8102).